A 149-amino-acid chain; its full sequence is Ribonuclease H (149 aa).

Positions 1-142 (MSDSVELFTD…ADQLANRGVD (142 aa)) constitute an RNase H type-1 domain. 4 residues coordinate Mg(2+): Asp-10, Glu-48, Asp-70, and Asp-134.

Belongs to the RNase H family. Monomer. Mg(2+) serves as cofactor.

The protein resides in the cytoplasm. The enzyme catalyses Endonucleolytic cleavage to 5'-phosphomonoester.. Endonuclease that specifically degrades the RNA of RNA-DNA hybrids. This chain is Ribonuclease H, found in Pseudomonas savastanoi pv. phaseolicola (strain 1448A / Race 6) (Pseudomonas syringae pv. phaseolicola (strain 1448A / Race 6)).